Here is a 265-residue protein sequence, read N- to C-terminus: Apolipoprotein A-I (265 aa).

Positions 1 to 18 (MKAVVLTLAVLFLTGSQA) are cleaved as a signal peptide. 2 repeat units span residues 67–88 (LKLLDNWDSLGSTFTKVREQLG) and 89–110 (PVTQEFWDNLEKETEALRQEMS). Residues 67–265 (LKLLDNWDSL…DEASKKLNAQ (199 aa)) are 10 X approximate tandem repeats. Met-109 carries the methionine sulfoxide modification. The stretch at 111–121 (KDLEEVKKKVQ) is one 3; half-length repeat. A run of 5 repeats spans residues 122 to 142 (PYLDDFQNKWQEEMETYRQKM), 144 to 165 (PLGAEFREGARQKVQELQEKLS), 166 to 187 (PLAEELRDRLRAHVEALRQHVA), 188 to 209 (PYSDDLRQRMAARFEALKEGGG), and 210 to 230 (SLAEYQAKAQEQLKALGEKAK). Met-135 carries the methionine sulfoxide modification. A 9; half-length repeat occupies 231–241 (PALEDLRQGLL). Repeat unit 10 spans residues 242-265 (PVLENLKVSILAAIDEASKKLNAQ).

It belongs to the apolipoprotein A1/A4/E family. Homodimer. Interacts with APOA1BP and CLU. Component of a sperm activating protein complex (SPAP), consisting of APOA1, an immunoglobulin heavy chain, an immunoglobulin light chain and albumin. Interacts with NDRG1. Interacts with SCGB3A2. Interacts with NAXE and YJEFN3. In terms of processing, glycosylated. Post-translationally, palmitoylated. Phosphorylation sites are present in the extracellular medium. Major protein of plasma HDL, also found in chylomicrons. Synthesized predominantly in the intestine and the liver.

Its subcellular location is the secreted. Functionally, participates in the reverse transport of cholesterol from tissues to the liver for excretion by promoting cholesterol efflux from tissues and by acting as a cofactor for the lecithin cholesterol acyltransferase (LCAT). As part of the SPAP complex, activates spermatozoa motility. This is Apolipoprotein A-I (APOA1) from Sus scrofa (Pig).